Here is a 218-residue protein sequence, read N- to C-terminus: MSAPSSAPALIPRRGMMLVLSSPSGAGKTTISRALLAEEDGLEMSVSVTTRAPRPGERDGEHYHFIDVARYMALTKDDGLLEHARVFENYYGTPRAPVEAALARGCDVLFDIDWQGTQQVAEKARTDLVSIFILPPSVGELERRLKGRAQDSDAVVAARMAKAMDEISHYFEYDYIIVNDDLDRSIADVRAILRAERLKRARRIGLAEFVNRMRGAGE.

One can recognise a Guanylate kinase-like domain in the interval 15-194 (GMMLVLSSPS…SIADVRAILR (180 aa)). ATP is bound at residue 22–29 (SPSGAGKT).

It belongs to the guanylate kinase family.

It localises to the cytoplasm. It carries out the reaction GMP + ATP = GDP + ADP. Essential for recycling GMP and indirectly, cGMP. The sequence is that of Guanylate kinase from Rhodospirillum rubrum (strain ATCC 11170 / ATH 1.1.1 / DSM 467 / LMG 4362 / NCIMB 8255 / S1).